We begin with the raw amino-acid sequence, 341 residues long: MEPAFGEVNQLGGVFVNGRPLPNAIRLRIVELAQLGIRPCDISRQLRVSHGCVSKILARYNETGSILPGAIGGSKPRVTTPTVVKHIRTYKQRDPGIFAWEIRDRLLADGVCDKYNVPSVSSISRILRNKIGNLAQQGHYDSYKQHQPTPQPALPYNHIYSYPSPITAAAAKVPTPPGVPAIPGSVAMPRTWPSSHSVTDILGIRSITDQVSDSSPYHSPKVEEWSSLGRNNFPAAAPHAVNGLEKGALEQEAKYGQAPNGLPAVGSFVSASSMAPYPTPAQVSPYMTYSAAPSGYVAGHGWQHAGGTSLSPHNCDIPASLAFKGMQAAREGSHSVTASVL.

Residues 4 to 130 (AFGEVNQLGG…SSISRILRNK (127 aa)) constitute a DNA-binding region (paired). A PAI subdomain region spans residues 7-63 (EVNQLGGVFVNGRPLPNAIRLRIVELAQLGIRPCDISRQLRVSHGCVSKILARYNET). Positions 82–130 (TVVKHIRTYKQRDPGIFAWEIRDRLLADGVCDKYNVPSVSSISRILRNK) are RED subdomain. An interaction with KDM5B region spans residues 168-189 (AAAAKVPTPPGVPAIPGSVAMP).

Interacts with KDM5B.

The protein resides in the nucleus. Functionally, transcription factor required for normal development of thymus, parathyroid glands, ultimobranchial bodies, teeth, skeletal elements of skull and larynx as well as distal limbs. The protein is Paired box protein Pax-9 (PAX9) of Pan troglodytes (Chimpanzee).